Reading from the N-terminus, the 541-residue chain is Chaperonin GroEL (541 aa).

Residues 29-32 (TLGP), 86-90 (DGTTT), glycine 413, 476-478 (NAA), and aspartate 492 each bind ATP.

The protein belongs to the chaperonin (HSP60) family. As to quaternary structure, forms a cylinder of 14 subunits composed of two heptameric rings stacked back-to-back. Interacts with the co-chaperonin GroES.

Its subcellular location is the cytoplasm. The enzyme catalyses ATP + H2O + a folded polypeptide = ADP + phosphate + an unfolded polypeptide.. Functionally, together with its co-chaperonin GroES, plays an essential role in assisting protein folding. The GroEL-GroES system forms a nano-cage that allows encapsulation of the non-native substrate proteins and provides a physical environment optimized to promote and accelerate protein folding. The polypeptide is Chaperonin GroEL (Streptococcus equi subsp. zooepidemicus (strain H70)).